Here is a 93-residue protein sequence, read N- to C-terminus: Large ribosomal subunit protein uL23 (93 aa).

The protein belongs to the universal ribosomal protein uL23 family. In terms of assembly, part of the 50S ribosomal subunit. Contacts protein L29, and trigger factor when it is bound to the ribosome.

In terms of biological role, one of the early assembly proteins it binds 23S rRNA. One of the proteins that surrounds the polypeptide exit tunnel on the outside of the ribosome. Forms the main docking site for trigger factor binding to the ribosome. The protein is Large ribosomal subunit protein uL23 of Campylobacter curvus (strain 525.92).